The following is a 928-amino-acid chain: Putative replication origin binding protein (928 aa).

Residues Asn-386–Ala-516 form the Helicase ATP-binding domain. Position 399-406 (Ala-399–Thr-406) interacts with ATP. The short motif at Asp-484–Asp-487 is the DEAD box element.

This sequence belongs to the herpesviridae oribp family.

Its function is as follows. Displays bipolar ssDNA and dsDNA unwinding activities that require the same core catalytic residues for unwinding in either direction, the 3'-5' direction being more robust. This Escherichia coli (Enterobacteria phage T5) protein is Putative replication origin binding protein.